Consider the following 378-residue polypeptide: 3-hydroxyisobutyryl-CoA hydrolase 1 (378 aa).

The residue at position 2 (alanine 2) is an N-acetylalanine. Glutamate 94, glycine 119, glutamate 142, and aspartate 150 together coordinate substrate.

Belongs to the enoyl-CoA hydratase/isomerase family. In terms of tissue distribution, expressed in roots, leaves, flowers and siliques.

The protein localises to the peroxisome. It catalyses the reaction 3-hydroxy-2-methylpropanoyl-CoA + H2O = 3-hydroxy-2-methylpropanoate + CoA + H(+). It functions in the pathway amino-acid degradation; L-valine degradation. Its activity is regulated as follows. Inhibited by copper. In terms of biological role, involved in valine catabolism. May be indirectly involved in benzoic acid biosynthesis and in cold signaling and cold tolerance. The chain is 3-hydroxyisobutyryl-CoA hydrolase 1 (CHY1) from Arabidopsis thaliana (Mouse-ear cress).